The sequence spans 1075 residues: DNA-directed RNA polymerase subunit beta (1075 aa).

The protein belongs to the RNA polymerase beta chain family. In plastids the minimal PEP RNA polymerase catalytic core is composed of four subunits: alpha, beta, beta', and beta''. When a (nuclear-encoded) sigma factor is associated with the core the holoenzyme is formed, which can initiate transcription.

It localises to the plastid. Its subcellular location is the chloroplast. The catalysed reaction is RNA(n) + a ribonucleoside 5'-triphosphate = RNA(n+1) + diphosphate. Functionally, DNA-dependent RNA polymerase catalyzes the transcription of DNA into RNA using the four ribonucleoside triphosphates as substrates. In Sorghum bicolor (Sorghum), this protein is DNA-directed RNA polymerase subunit beta.